Here is a 255-residue protein sequence, read N- to C-terminus: Thiazole synthase (255 aa).

The active-site Schiff-base intermediate with DXP is the lysine 95. Residues glycine 156, 182-183 (AG), and 204-205 (NT) contribute to the 1-deoxy-D-xylulose 5-phosphate site.

This sequence belongs to the ThiG family. Homotetramer. Forms heterodimers with either ThiH or ThiS.

The protein resides in the cytoplasm. The catalysed reaction is [ThiS sulfur-carrier protein]-C-terminal-Gly-aminoethanethioate + 2-iminoacetate + 1-deoxy-D-xylulose 5-phosphate = [ThiS sulfur-carrier protein]-C-terminal Gly-Gly + 2-[(2R,5Z)-2-carboxy-4-methylthiazol-5(2H)-ylidene]ethyl phosphate + 2 H2O + H(+). It functions in the pathway cofactor biosynthesis; thiamine diphosphate biosynthesis. Its function is as follows. Catalyzes the rearrangement of 1-deoxy-D-xylulose 5-phosphate (DXP) to produce the thiazole phosphate moiety of thiamine. Sulfur is provided by the thiocarboxylate moiety of the carrier protein ThiS. In vitro, sulfur can be provided by H(2)S. This Aeromonas salmonicida (strain A449) protein is Thiazole synthase.